The primary structure comprises 677 residues: mRNA export factor Gle1 (677 aa).

The span at E34–P48 shows a compositional bias: basic and acidic residues. Disordered regions lie at residues E34 to I65, K113 to Q136, and E294 to T366. The segment covering E49–E60 has biased composition (pro residues). Coiled-coil stretches lie at residues E122–H179 and Q280–V346. Residues E294–K340 show a composition bias toward basic and acidic residues.

It belongs to the GLE1 family. May associate with the NPC.

It localises to the cytoplasm. The protein resides in the nucleus. The protein localises to the nuclear pore complex. Its function is as follows. Required for the export of mRNAs containing poly(A) tails from the nucleus into the cytoplasm. May be involved in the terminal step of the mRNA transport through the nuclear pore complex (NPC). The sequence is that of mRNA export factor Gle1 from Drosophila melanogaster (Fruit fly).